The sequence spans 340 residues: Functional amyloid subunit FapC (340 aa).

The first 24 residues, 1 to 24 (MKATMVLTPLALAMAAVLSVSAYA), serve as a signal peptide directing secretion. Residues 67-100 (NNASVSGSIKDASGNVGVNVAAGDNNQQANAAAL) form a FapC_R1 repeat. Positions 101 to 133 (ASADASFVFGTATASTSVLQSGYGNTLNNYSNP) are linker 1. The stretch at 134–167 (NTASLSNSANNVSGNLGVNVAAGNFNQQKNDLAA) is one FapC_R2 repeat. Residues 168 to 290 (AVSNGQYSTA…AIVGFKTPVT (123 aa)) form a linker 2 region. The FapC_R3 repeat unit spans residues 291 to 324 (NNASLSNSLQNVSGNVGVNIAAGGGNQQSNSLSI). The short motif at 328 to 331 (CSSC) is the Cys-X-X-Cys element.

Belongs to the FapB/FapC family. The major component of purified amyloid fibrils. Fibrils are resistant to boiling in 2% (weight/vol) SDS and require &gt;90% (vol/vol) formic acid to dissolve. Interacts with FapA in vitro.

The protein resides in the fimbrium. It is found in the secreted. In terms of biological role, the major functional amyloid subunit in this bacterium. Upon overexpression of the endogenous six-gene locus (fapA-fapF), cells form large clumps during liquid growth, make large amounts of biofilm and produce amyloid fibrils. The polypeptide is Functional amyloid subunit FapC (Pseudomonas aeruginosa (strain ATCC 15692 / DSM 22644 / CIP 104116 / JCM 14847 / LMG 12228 / 1C / PRS 101 / PAO1)).